The sequence spans 309 residues: Ornithine carbamoyltransferase (309 aa).

Carbamoyl phosphate contacts are provided by residues 56 to 59, Q83, R107, and 134 to 137; these read STRT and HPCQ. L-ornithine-binding positions include N165, D223, and 227–228; that span reads SM. Carbamoyl phosphate contacts are provided by residues 263–264 and R291; that span reads CL.

The protein belongs to the aspartate/ornithine carbamoyltransferase superfamily. OTCase family.

The protein resides in the cytoplasm. It carries out the reaction carbamoyl phosphate + L-ornithine = L-citrulline + phosphate + H(+). It participates in amino-acid biosynthesis; L-arginine biosynthesis; L-arginine from L-ornithine and carbamoyl phosphate: step 1/3. Its function is as follows. Reversibly catalyzes the transfer of the carbamoyl group from carbamoyl phosphate (CP) to the N(epsilon) atom of ornithine (ORN) to produce L-citrulline. This is Ornithine carbamoyltransferase from Burkholderia lata (strain ATCC 17760 / DSM 23089 / LMG 22485 / NCIMB 9086 / R18194 / 383).